The chain runs to 122 residues: MSLTNEKIVEAIAEKSIMEVMELVKAIEDRFGVSAAAPVMVSGSAAAAAPVEEQTEFTVTLKEAGAKKVEVIKAVRAVTGLGLKEAKDLTEAGGILKEAVSKEEAEKIKKELEAAGATVEVK.

It belongs to the bacterial ribosomal protein bL12 family. As to quaternary structure, homodimer. Part of the ribosomal stalk of the 50S ribosomal subunit. Forms a multimeric L10(L12)X complex, where L10 forms an elongated spine to which 2 to 4 L12 dimers bind in a sequential fashion. Binds GTP-bound translation factors.

Its function is as follows. Forms part of the ribosomal stalk which helps the ribosome interact with GTP-bound translation factors. Is thus essential for accurate translation. The chain is Large ribosomal subunit protein bL12 from Xylella fastidiosa (strain M12).